The following is a 370-amino-acid chain: MLPRLVCISDYEQHVRSVLQKSVYDYYRSGANDQETLADNIQAFSRWKLYPRMLRNVADIDLSTSVLGQRVSMPICVGATAMQCMAHVDGELATVRACQTMGTGMMLSSWATSSIEEVAEAGPEALRWMQLYIYKDREISRQIVKRAEKQGYKAIFVTVDTPYLGNRIDDVRNRFKLPPQLRMKNFETNDLAFSPKGNFGDNSGLAEYVAQAIDPSLSWDDITWLRRLTSLPIVVKGILRGDDAKEAVKHGVDGILVSNHGARQLDGVPATIDVLPEIVEAVEGKVEVFLDGGVRKGTDVLKALALGAKAVFVGRPIIWGLAFQGEKGVQDVLEILKEEFRLAMALSGCQNVKVIDKTLVRKNPLAVSKI.

The region spanning 1–365 (MLPRLVCISD…DKTLVRKNPL (365 aa)) is the FMN hydroxy acid dehydrogenase domain. Glyoxylate is bound at residue Tyr-26. Residues 79–81 (ATA), Ser-108, and Gln-130 each bind FMN. Residue Tyr-132 participates in glyoxylate binding. Position 158 (Thr-158) interacts with FMN. Residue Arg-167 participates in glyoxylate binding. Lys-184 carries the N6-succinyllysine modification. A phosphoserine mark is found at Ser-194 and Ser-230. 2 residues coordinate FMN: Lys-236 and Ser-258. Residues His-260 and Arg-263 each coordinate glyoxylate. His-260 (proton acceptor) is an active-site residue. FMN is bound by residues 291–295 (DGGVR) and 314–315 (GR). The short motif at 368 to 370 (SKI) is the Microbody targeting signal element.

The protein belongs to the FMN-dependent alpha-hydroxy acid dehydrogenase family. Homotetramer. FMN serves as cofactor. Liver.

The protein resides in the peroxisome matrix. It carries out the reaction a (2S)-2-hydroxycarboxylate + O2 = a 2-oxocarboxylate + H2O2. The catalysed reaction is glycolate + O2 = glyoxylate + H2O2. It catalyses the reaction glyoxylate + O2 + H2O = oxalate + H2O2 + H(+). The enzyme catalyses 2-hydroxyhexadecanoate + O2 = 2-oxohexadecanoate + H2O2. It carries out the reaction 2-hydroxyoctanoate + O2 = 2-oxooctanoate + H2O2. It participates in amino-acid biosynthesis; glycine biosynthesis. Functionally, broad substrate specificity (S)-2-hydroxy-acid oxidase that preferentially oxidizes glycolate. The glyoxylate produced by the oxidation of glycolate can then be utilized by alanine-glyoxylate aminotransferase for the peroxisomal synthesis of glycine; this pathway appears to be an important step for the detoxification of glyoxylate which, if allowed to accumulate, may be metabolized to oxalate with formation of kidney stones. Can also catalyze the oxidation glyoxylate, and long chain hydroxyacids such as 2-hydroxyhexadecanoate and 2-hydroxyoctanoate. Active in vitro with the artificial electron acceptor 2,6-dichlorophenolindophenol (DCIP), but O2 is believed to be the physiological electron acceptor, leading to the production of H2O2. This is 2-Hydroxyacid oxidase 1 from Mus musculus (Mouse).